The sequence spans 121 residues: Small ribosomal subunit protein uS13 (121 aa).

Residues 91-121 (HRRGLPVRGQKTKNNARTRKGPVKTVANKKK) form a disordered region.

The protein belongs to the universal ribosomal protein uS13 family. Part of the 30S ribosomal subunit. Forms a loose heterodimer with protein S19. Forms two bridges to the 50S subunit in the 70S ribosome.

Functionally, located at the top of the head of the 30S subunit, it contacts several helices of the 16S rRNA. In the 70S ribosome it contacts the 23S rRNA (bridge B1a) and protein L5 of the 50S subunit (bridge B1b), connecting the 2 subunits; these bridges are implicated in subunit movement. Contacts the tRNAs in the A and P-sites. This is Small ribosomal subunit protein uS13 from Staphylococcus saprophyticus subsp. saprophyticus (strain ATCC 15305 / DSM 20229 / NCIMB 8711 / NCTC 7292 / S-41).